Here is a 229-residue protein sequence, read N- to C-terminus: Potassium/proton antiporter CemA (229 aa).

Helical transmembrane passes span 7-27 (LNPLPYLASIVFLPWGISLSF), 106-126 (IILHFSTNITCFAILSAYSIL), and 189-209 (IISGLVSTFPVILDTILKYWI).

It belongs to the CemA family.

The protein localises to the plastid. The protein resides in the chloroplast inner membrane. It catalyses the reaction K(+)(in) + H(+)(out) = K(+)(out) + H(+)(in). Its function is as follows. Contributes to K(+)/H(+) antiport activity by supporting proton efflux to control proton extrusion and homeostasis in chloroplasts in a light-dependent manner to modulate photosynthesis. Prevents excessive induction of non-photochemical quenching (NPQ) under continuous-light conditions. Indirectly promotes efficient inorganic carbon uptake into chloroplasts. This chain is Potassium/proton antiporter CemA, found in Nymphaea alba (White water-lily).